The sequence spans 345 residues: Phosphoribosylformylglycinamidine cyclo-ligase (345 aa).

It belongs to the AIR synthase family.

It localises to the cytoplasm. It catalyses the reaction 2-formamido-N(1)-(5-O-phospho-beta-D-ribosyl)acetamidine + ATP = 5-amino-1-(5-phospho-beta-D-ribosyl)imidazole + ADP + phosphate + H(+). The protein operates within purine metabolism; IMP biosynthesis via de novo pathway; 5-amino-1-(5-phospho-D-ribosyl)imidazole from N(2)-formyl-N(1)-(5-phospho-D-ribosyl)glycinamide: step 2/2. The chain is Phosphoribosylformylglycinamidine cyclo-ligase from Shewanella woodyi (strain ATCC 51908 / MS32).